Consider the following 223-residue polypeptide: Thiamine-phosphate synthase (223 aa).

Residues 47-51 (QLRDK) and Asn-84 each bind 4-amino-2-methyl-5-(diphosphooxymethyl)pyrimidine. Mg(2+)-binding residues include Asp-85 and Asp-104. Ser-123 lines the 4-amino-2-methyl-5-(diphosphooxymethyl)pyrimidine pocket. 150–152 (TPT) is a 2-[(2R,5Z)-2-carboxy-4-methylthiazol-5(2H)-ylidene]ethyl phosphate binding site. Lys-153 is a 4-amino-2-methyl-5-(diphosphooxymethyl)pyrimidine binding site. Gly-182 is a binding site for 2-[(2R,5Z)-2-carboxy-4-methylthiazol-5(2H)-ylidene]ethyl phosphate.

This sequence belongs to the thiamine-phosphate synthase family. Requires Mg(2+) as cofactor.

It catalyses the reaction 2-[(2R,5Z)-2-carboxy-4-methylthiazol-5(2H)-ylidene]ethyl phosphate + 4-amino-2-methyl-5-(diphosphooxymethyl)pyrimidine + 2 H(+) = thiamine phosphate + CO2 + diphosphate. It carries out the reaction 2-(2-carboxy-4-methylthiazol-5-yl)ethyl phosphate + 4-amino-2-methyl-5-(diphosphooxymethyl)pyrimidine + 2 H(+) = thiamine phosphate + CO2 + diphosphate. The catalysed reaction is 4-methyl-5-(2-phosphooxyethyl)-thiazole + 4-amino-2-methyl-5-(diphosphooxymethyl)pyrimidine + H(+) = thiamine phosphate + diphosphate. It functions in the pathway cofactor biosynthesis; thiamine diphosphate biosynthesis; thiamine phosphate from 4-amino-2-methyl-5-diphosphomethylpyrimidine and 4-methyl-5-(2-phosphoethyl)-thiazole: step 1/1. Functionally, condenses 4-methyl-5-(beta-hydroxyethyl)thiazole monophosphate (THZ-P) and 2-methyl-4-amino-5-hydroxymethyl pyrimidine pyrophosphate (HMP-PP) to form thiamine monophosphate (TMP). This is Thiamine-phosphate synthase from Saccharopolyspora erythraea (strain ATCC 11635 / DSM 40517 / JCM 4748 / NBRC 13426 / NCIMB 8594 / NRRL 2338).